A 219-amino-acid chain; its full sequence is Probable nicotinate-nucleotide adenylyltransferase (219 aa).

The protein belongs to the NadD family.

The catalysed reaction is nicotinate beta-D-ribonucleotide + ATP + H(+) = deamido-NAD(+) + diphosphate. Its pathway is cofactor biosynthesis; NAD(+) biosynthesis; deamido-NAD(+) from nicotinate D-ribonucleotide: step 1/1. Its function is as follows. Catalyzes the reversible adenylation of nicotinate mononucleotide (NaMN) to nicotinic acid adenine dinucleotide (NaAD). In Herminiimonas arsenicoxydans, this protein is Probable nicotinate-nucleotide adenylyltransferase.